Reading from the N-terminus, the 424-residue chain is Serine hydroxymethyltransferase (424 aa).

Residues Leu113 and 117–119 contribute to the (6S)-5,6,7,8-tetrahydrofolate site; that span reads GHL. The residue at position 222 (Lys222) is an N6-(pyridoxal phosphate)lysine. Residue 361-363 participates in (6S)-5,6,7,8-tetrahydrofolate binding; the sequence is SPF.

It belongs to the SHMT family. Homodimer. The cofactor is pyridoxal 5'-phosphate.

Its subcellular location is the cytoplasm. It catalyses the reaction (6R)-5,10-methylene-5,6,7,8-tetrahydrofolate + glycine + H2O = (6S)-5,6,7,8-tetrahydrofolate + L-serine. It participates in one-carbon metabolism; tetrahydrofolate interconversion. It functions in the pathway amino-acid biosynthesis; glycine biosynthesis; glycine from L-serine: step 1/1. Catalyzes the reversible interconversion of serine and glycine with tetrahydrofolate (THF) serving as the one-carbon carrier. This reaction serves as the major source of one-carbon groups required for the biosynthesis of purines, thymidylate, methionine, and other important biomolecules. Also exhibits THF-independent aldolase activity toward beta-hydroxyamino acids, producing glycine and aldehydes, via a retro-aldol mechanism. This Flavobacterium psychrophilum (strain ATCC 49511 / DSM 21280 / CIP 103535 / JIP02/86) protein is Serine hydroxymethyltransferase.